The chain runs to 228 residues: Lipoprotein-releasing system ATP-binding protein LolD (228 aa).

The ABC transporter domain occupies 5–228 (FALSAISKSF…SGTLQNYTDY (224 aa)). 40 to 47 (GPSGSGKS) lines the ATP pocket.

Belongs to the ABC transporter superfamily. Lipoprotein translocase (TC 3.A.1.125) family. As to quaternary structure, the complex is composed of two ATP-binding proteins (LolD) and two transmembrane proteins (LolC and LolE).

It is found in the cell inner membrane. Part of the ABC transporter complex LolCDE involved in the translocation of mature outer membrane-directed lipoproteins, from the inner membrane to the periplasmic chaperone, LolA. Responsible for the formation of the LolA-lipoprotein complex in an ATP-dependent manner. The sequence is that of Lipoprotein-releasing system ATP-binding protein LolD from Ehrlichia ruminantium (strain Gardel).